A 436-amino-acid polypeptide reads, in one-letter code: 3-oxo-tetronate kinase (436 aa).

Residues S272, G372 to T375, and G415 each bind ATP.

It belongs to the four-carbon acid sugar kinase family.

It carries out the reaction 3-dehydro-L-erythronate + ATP = 3-dehydro-4-O-phospho-L-erythronate + ADP + H(+). It catalyses the reaction 3-dehydro-D-erythronate + ATP = 3-dehydro-4-O-phospho-D-erythronate + ADP + H(+). Catalyzes the ATP-dependent phosphorylation of 3-oxo-tetronate to 3-oxo-tetronate 4-phosphate. This Brucella melitensis biotype 1 (strain ATCC 23456 / CCUG 17765 / NCTC 10094 / 16M) protein is 3-oxo-tetronate kinase.